Here is a 98-residue protein sequence, read N- to C-terminus: NADH-ubiquinone oxidoreductase chain 4L (98 aa).

3 helical membrane-spanning segments follow: residues 1 to 21, 29 to 49, and 61 to 81; these read MTLV…GLLM, SLLC…VTIL, and IILL…LVMV.

The protein belongs to the complex I subunit 4L family. In terms of assembly, core subunit of respiratory chain NADH dehydrogenase (Complex I) which is composed of 45 different subunits.

It localises to the mitochondrion inner membrane. The enzyme catalyses a ubiquinone + NADH + 5 H(+)(in) = a ubiquinol + NAD(+) + 4 H(+)(out). Core subunit of the mitochondrial membrane respiratory chain NADH dehydrogenase (Complex I) which catalyzes electron transfer from NADH through the respiratory chain, using ubiquinone as an electron acceptor. Part of the enzyme membrane arm which is embedded in the lipid bilayer and involved in proton translocation. In Rousettus aegyptiacus (Egyptian fruit bat), this protein is NADH-ubiquinone oxidoreductase chain 4L (MT-ND4L).